The sequence spans 246 residues: Pyridoxine 5'-phosphate synthase (246 aa).

3-amino-2-oxopropyl phosphate is bound at residue Asn12. 14-15 contributes to the 1-deoxy-D-xylulose 5-phosphate binding site; the sequence is DH. Arg23 contacts 3-amino-2-oxopropyl phosphate. His48 serves as the catalytic Proton acceptor. 1-deoxy-D-xylulose 5-phosphate is bound by residues Arg50 and His55. Glu75 functions as the Proton acceptor in the catalytic mechanism. Position 105 (Thr105) interacts with 1-deoxy-D-xylulose 5-phosphate. His196 functions as the Proton donor in the catalytic mechanism. Residues Gly197 and 218 to 219 each bind 3-amino-2-oxopropyl phosphate; that span reads GH.

Belongs to the PNP synthase family. In terms of assembly, homooctamer; tetramer of dimers.

It is found in the cytoplasm. The catalysed reaction is 3-amino-2-oxopropyl phosphate + 1-deoxy-D-xylulose 5-phosphate = pyridoxine 5'-phosphate + phosphate + 2 H2O + H(+). Its pathway is cofactor biosynthesis; pyridoxine 5'-phosphate biosynthesis; pyridoxine 5'-phosphate from D-erythrose 4-phosphate: step 5/5. Functionally, catalyzes the complicated ring closure reaction between the two acyclic compounds 1-deoxy-D-xylulose-5-phosphate (DXP) and 3-amino-2-oxopropyl phosphate (1-amino-acetone-3-phosphate or AAP) to form pyridoxine 5'-phosphate (PNP) and inorganic phosphate. This Pseudomonas putida (strain W619) protein is Pyridoxine 5'-phosphate synthase.